A 74-amino-acid polypeptide reads, in one-letter code: Translation initiation factor IF-1 (74 aa).

Residues 1 to 73 (MAKKDDIIEF…TKGRITYRGK (73 aa)) enclose the S1-like domain.

Belongs to the IF-1 family. In terms of assembly, component of the 30S ribosomal translation pre-initiation complex which assembles on the 30S ribosome in the order IF-2 and IF-3, IF-1 and N-formylmethionyl-tRNA(fMet); mRNA recruitment can occur at any time during PIC assembly.

The protein resides in the cytoplasm. One of the essential components for the initiation of protein synthesis. Stabilizes the binding of IF-2 and IF-3 on the 30S subunit to which N-formylmethionyl-tRNA(fMet) subsequently binds. Helps modulate mRNA selection, yielding the 30S pre-initiation complex (PIC). Upon addition of the 50S ribosomal subunit IF-1, IF-2 and IF-3 are released leaving the mature 70S translation initiation complex. In Psychrobacter sp. (strain PRwf-1), this protein is Translation initiation factor IF-1.